We begin with the raw amino-acid sequence, 216 residues long: Large ribosomal subunit protein bL21 (216 aa).

This sequence belongs to the bacterial ribosomal protein bL21 family. As to quaternary structure, part of the 50S ribosomal subunit. Contacts protein L20.

Its function is as follows. This protein binds to 23S rRNA in the presence of protein L20. In Roseobacter denitrificans (strain ATCC 33942 / OCh 114) (Erythrobacter sp. (strain OCh 114)), this protein is Large ribosomal subunit protein bL21.